Reading from the N-terminus, the 141-residue chain is MAIERTLSIIKPDAVAKNVIGQIYSRFEGAGLKIVAARMAHLSRADAEKFYAVHAARPFFKDLVDFMISGPVMIQVLEGEGAILKNRDLMGATDPKKAEKGTIRADFADSIDANAVHGSDAPETAAVEIAFFFPEMNVYSR.

ATP-binding residues include Lys11, Phe59, Arg87, Thr93, Arg104, and Asn114. Catalysis depends on His117, which acts as the Pros-phosphohistidine intermediate.

This sequence belongs to the NDK family. As to quaternary structure, homotetramer. Requires Mg(2+) as cofactor.

It localises to the cytoplasm. The catalysed reaction is a 2'-deoxyribonucleoside 5'-diphosphate + ATP = a 2'-deoxyribonucleoside 5'-triphosphate + ADP. It carries out the reaction a ribonucleoside 5'-diphosphate + ATP = a ribonucleoside 5'-triphosphate + ADP. Major role in the synthesis of nucleoside triphosphates other than ATP. The ATP gamma phosphate is transferred to the NDP beta phosphate via a ping-pong mechanism, using a phosphorylated active-site intermediate. The chain is Nucleoside diphosphate kinase from Burkholderia multivorans (strain ATCC 17616 / 249).